Consider the following 373-residue polypeptide: S-adenosylmethionine:tRNA ribosyltransferase-isomerase (373 aa).

It belongs to the QueA family. In terms of assembly, monomer.

The protein localises to the cytoplasm. It carries out the reaction 7-aminomethyl-7-carbaguanosine(34) in tRNA + S-adenosyl-L-methionine = epoxyqueuosine(34) in tRNA + adenine + L-methionine + 2 H(+). The protein operates within tRNA modification; tRNA-queuosine biosynthesis. Transfers and isomerizes the ribose moiety from AdoMet to the 7-aminomethyl group of 7-deazaguanine (preQ1-tRNA) to give epoxyqueuosine (oQ-tRNA). This chain is S-adenosylmethionine:tRNA ribosyltransferase-isomerase, found in Rhizobium etli (strain CIAT 652).